We begin with the raw amino-acid sequence, 310 residues long: Putative dihydroorotate dehydrogenase A (fumarate) (310 aa).

Substrate contacts are provided by residues Lys-45, 69–73, and Asn-128; that span reads NSMGL. 45-46 serves as a coordination point for FMN; it reads KT. Residue Asn-128 participates in FMN binding. Cys-131 serves as the catalytic Nucleophile. FMN contacts are provided by Lys-165 and Val-193. Position 194 to 195 (194 to 195) interacts with substrate; sequence NS. FMN-binding positions include Gly-220, 248–249, and 270–271; these read GG and GT.

The protein belongs to the dihydroorotate dehydrogenase family. Type 1 subfamily. As to quaternary structure, homodimer. The cofactor is FMN.

It localises to the cytoplasm. The catalysed reaction is (S)-dihydroorotate + fumarate = orotate + succinate. It participates in pyrimidine metabolism; UMP biosynthesis via de novo pathway. Its function is as follows. Catalyzes the conversion of dihydroorotate to orotate with fumarate as the electron acceptor. The polypeptide is Putative dihydroorotate dehydrogenase A (fumarate) (pyrD) (Streptococcus agalactiae serotype Ia (strain ATCC 27591 / A909 / CDC SS700)).